The chain runs to 153 residues: MNVGVAHSEVNPNTRVMNSRGIWLTYALGVGMLHIVLLSIPFFSVPVVWTLTNVIHNFGMYVFMHAVKGTPFETPDQGKARLLTHWEQLDYGVQFTSSRKFFTISPIILYFLASFYTKYDTAHFVINTASLLSVLIPKLPQLHGVRIFGINKY.

Residues 1–27 (MNVGVAHSEVNPNTRVMNSRGIWLTYA) are Cytoplasmic-facing. The next 2 membrane-spanning stretches (helical) occupy residues 28-46 (LGVG…FSVP) and 47-64 (VVWT…YVFM). Over 65 to 105 (HAVKGTPFETPDQGKARLLTHWEQLDYGVQFTSSRKFFTIS) the chain is Cytoplasmic. 2 consecutive transmembrane segments (helical) span residues 106–123 (PIIL…DTAH) and 124–140 (FVIN…PKLP). At 141 to 153 (QLHGVRIFGINKY) the chain is on the cytoplasmic side.

Belongs to the ORM family. Ceramide-sensitive subunit of the serine palmitoyltransferase (SPT) complex, which is also composed of SPTLC1, SPTLC2/3 and SPTSSA/B.

Its subcellular location is the endoplasmic reticulum membrane. In terms of biological role, plays an essential role in the homeostatic regulation of sphingolipid de novo biosynthesis by modulating the activity of the serine palmitoyltransferase (SPT) in response to ceramide levels. When complexed to SPT, the binding of ceramides to its N-terminus stabilizes a conformation that block SPT substrate entry, hence preventing SPT catalytic activity. Through this mechanism, maintains ceramide levels at sufficient concentrations for the production of complex sphingolipids, but which prevents the accumulation of ceramides to levels that trigger apoptosis. The protein is ORM1-like protein 1 (ormdl1) of Danio rerio (Zebrafish).